A 267-amino-acid chain; its full sequence is MHPMLNIAVRAARKAGNLIAKNYETPDAVEASQKGSNDFVTNVDKAAEAVIIDTIRKSYPQHTIITEESGELEGTDQDVQWVIDPLDGTTNFIKRLPHFAVSIAVRIKGRTEVAVVYDPMRNELFTATRGQGAQLNGYRLRGSTARDLDGTILATGFPFKAKQYATTYINIVGKLFNECADFRRTGSAALDLAYVAAGRVDGFFEIGLRPWDFAAGELLVREAGGIVSDFTGGHNYMLTGNIVAGNPRVVKAMLANMRDELSDALKR.

E67, D84, and L86 together coordinate Mg(2+). E67 provides a ligand contact to substrate. Residues 86-89 (LDGT), R183, and D212 each bind substrate.

Belongs to the inositol monophosphatase superfamily. In terms of assembly, homodimer. The rRNA transcription and antitermination complex (rrnTAC) consists of RNA polymerase (RNAP), NusA, NusB, NusE (rpsJ), NusG, SubB, ribosomal protein S4, DNA and precursor rRNA; S4 is more flexible than other subunits. The cofactor is Mg(2+).

It is found in the cytoplasm. The enzyme catalyses a myo-inositol phosphate + H2O = myo-inositol + phosphate. In terms of biological role, part of the processive rRNA transcription and antitermination complex (rrnTAC). The complex forms an RNA-chaperone ring around the RNA exit tunnel of RNA polymerase (RNAP). It supports rapid transcription and antitermination of rRNA operons, cotranscriptional rRNA folding, and annealing of distal rRNA regions to allow correct ribosome biogenesis. This subunit may play a central role in organizing the structure. IMPase activity is not required for its Nus factor function. The chain is Nus factor SuhB (suhB) from Escherichia coli O157:H7.